Reading from the N-terminus, the 1433-residue chain is DNA-directed RNA polymerase subunit beta' (1433 aa).

C60, C62, C75, and C78 together coordinate Zn(2+). Mg(2+) contacts are provided by D449, D451, and D453. C777, C851, C858, and C861 together coordinate Zn(2+). Composition is skewed to acidic residues over residues 1383–1393 (DSEEEEEELSE) and 1411–1433 (EEDE…DDDD). The interval 1383-1433 (DSEEEEEELSELSEAAPVSTATLSKLVAEEDEDEDELEEEADDSDDEDDDD) is disordered.

It belongs to the RNA polymerase beta' chain family. In terms of assembly, the RNAP catalytic core consists of 2 alpha, 1 beta, 1 beta' and 1 omega subunit. When a sigma factor is associated with the core the holoenzyme is formed, which can initiate transcription. The cofactor is Mg(2+). Zn(2+) serves as cofactor.

The enzyme catalyses RNA(n) + a ribonucleoside 5'-triphosphate = RNA(n+1) + diphosphate. Functionally, DNA-dependent RNA polymerase catalyzes the transcription of DNA into RNA using the four ribonucleoside triphosphates as substrates. This chain is DNA-directed RNA polymerase subunit beta', found in Leptospira biflexa serovar Patoc (strain Patoc 1 / Ames).